Reading from the N-terminus, the 549-residue chain is Protein EPD1 (549 aa).

Positions 1-22 are cleaved as a signal peptide; the sequence is MLLNSLFPSILAAATFVTSAAA. Asparagine 40 and asparagine 59 each carry an N-linked (GlcNAc...) asparagine glycan. An intrachain disulfide couples cysteine 72 to cysteine 101. Residues asparagine 147 and asparagine 163 are each glycosylated (N-linked (GlcNAc...) asparagine). Cystine bridges form between cysteine 214/cysteine 347, cysteine 232/cysteine 263, cysteine 369/cysteine 420, cysteine 378/cysteine 444, and cysteine 397/cysteine 402. Over residues 336–356 the composition is skewed to polar residues; it reads AESASGVSRTSCPTNTDNWEA. Residues 336-361 are disordered; it reads AESASGVSRTSCPTNTDNWEASTELP. Residue asparagine 383 is glycosylated (N-linked (GlcNAc...) asparagine). Residues asparagine 408 and asparagine 438 are each glycosylated (N-linked (GlcNAc...) asparagine). The segment at 479-519 is disordered; it reads SVRTDTSEATTDSGSGSSNSGSASSSKSTSSSTSSGSSGSK. Positions 487–519 are enriched in low complexity; the sequence is ATTDSGSGSSNSGSASSSKSTSSSTSSGSSGSK.

Belongs to the glycosyl hydrolase 72 family.

It localises to the cell membrane. This chain is Protein EPD1 (EPD1), found in Candida maltosa (Yeast).